A 517-amino-acid chain; its full sequence is B3 domain-containing protein REM1 (517 aa).

The TF-B3 1 DNA-binding region spans 7 to 92 (FSLFQQKFRT…VFHVAVVSPS (86 aa)). The segment covering 115 to 140 (DDVDDDDYGQDDEDDDDDDDEGEDNI) has biased composition (acidic residues). Residues 115-158 (DDVDDDDYGQDDEDDDDDDDEGEDNIENISEKTDKRQEADSSSD) are disordered. Positions 143-157 (ISEKTDKRQEADSSS) are enriched in basic and acidic residues. 2 DNA-binding regions (TF-B3) span residues 162–259 (FITA…CPQE) and 285–385 (FLIV…FCSK). Residues 393–415 (GKGNQRTRKKRACETAPQPRNVK) are disordered.

As to expression, expressed in the shoot apical meristem (SAM), in the inflorescence apex and flowers.

It localises to the nucleus. Functionally, may play a role in flower development. The protein is B3 domain-containing protein REM1 (REM1) of Arabidopsis thaliana (Mouse-ear cress).